The primary structure comprises 276 residues: Short-chain dehydrogenase anuF (276 aa).

I18, D68, K130, Y176, K180, V209, and T211 together coordinate NADP(+). The active-site Proton acceptor is the Y176. Y176 functions as the Proton donor in the catalytic mechanism. K180 functions as the Lowers pKa of active site Tyr in the catalytic mechanism.

This sequence belongs to the short-chain dehydrogenases/reductases (SDR) family.

The enzyme catalyses (2R,9S)-annullatin H + A = (2R)-annullatin F + AH2. Its function is as follows. Cytochrome P450 monooxygenase; part of the gene cluster that mediates the biosynthesis of annullatin D, an alkylated aromatic polyketide with a fused dihydrobenzofuran lactone ring system that exhibits potent agonistic activities toward the cannabinoid receptors. Within the pathway, anuF is involved in the formation of (2R)-annullatin F from the diastereomer of (2S,9S)-annullatin H (compound 12). The annullatin backbone 2-hydroxymethyl-3-pentylphenol is assembled from one acetyl-CoA starter unit and 5 malonyl-CoA elongation units by cooperation of the highly reducing polyketide synthase anuA, the short-chain dehydrogenase anuB and the oxidoreductase anuC, before being hydroxylated at the C-5 alkyl chain by the cytochrome P450 monooxygenase anuE to form (8S)-annullatin E. The prenyltransferase anuH subsequently installs one isoprenyl group at the benzene ring to form (8S)-annullatin J. Enzymatic or nonenzymatic dihydro-benzofuran ring formation between the prenyl and the phenolic hydroxyl groups in (8S)-annullatin J results in two diastereomers (2S,9S)-annullatin H and compound 12. The intermediate (2S,9S)-annullatin H is then converted to (2S,9S)-annullatin D by the FAD-linked oxidoreductase anuG-catalyzed five-member lactone ring formation. The isomer 12 acts as a substrate for the short-chain dehydrogenase anuF and is oxidized to (2R)-annullatin F, which is subsequently acetylated by an acetyltransferase leading to (2R)-annullatin G formation. The remaining enzymes identified within the cluster, anuD, anuI and anuJ, seem not to be involved in annullatin biosynthesis. The chain is Short-chain dehydrogenase anuF from Penicillium roqueforti (strain FM164).